The chain runs to 136 residues: HTH-type transcriptional regulator LrpA (136 aa).

Positions 2 to 63 (IDEIDKKILD…EVNQVKLGFS (62 aa)) constitute an HTH asnC-type domain. A DNA-binding region (H-T-H motif) is located at residues 21–40 (MKKLGEKVHLTAPATASRVV).

Its function is as follows. Negative regulation of glyA transcription and kinB-dependent sporulation. The chain is HTH-type transcriptional regulator LrpA (lrpA) from Bacillus subtilis (strain 168).